Consider the following 500-residue polypeptide: Centrosomal protein of 57 kDa (500 aa).

A compositionally biased stretch (low complexity) spans 1 to 17; sequence MAAASVSAASGSHLSNS. Disordered regions lie at residues 1–34 and 43–62; these read MAAASVSAASGSHLSNSFAEPSRSNGSMVRHSSS and KPFLNSDLRRSPSKPTLAYP. Polar residues predominate over residues 18-34; that stretch reads FAEPSRSNGSMVRHSSS. S53 and S55 each carry phosphoserine. A centrosome localization domain (CLD) region spans residues 58–239; the sequence is TLAYPESNSR…KAAELQTGLE (182 aa). Coiled-coil stretches lie at residues 63–242 and 392–492; these read ESNS…ETNR and ELKD…NSLQ. Positions 277–491 are mediates interaction with microtubules; that stretch reads GAQPHYRLCL…KDMQSIQNSL (215 aa). Positions 434–450 are enriched in basic and acidic residues; sequence KKELKATKKTLDEERNS. A disordered region spans residues 434–472; sequence KKELKATKKTLDEERNSSSRSGITGTTNKKDFMKLRPGE. Over residues 451-460 the composition is skewed to polar residues; sequence SSRSGITGTT. A compositionally biased stretch (basic and acidic residues) spans 461–471; the sequence is NKKDFMKLRPG.

The protein belongs to the translokin family. As to quaternary structure, homodimer and homooligomer. Interacts with microtubules. Interacts with FGF2 and RAP80. Does not interact with FGF1 or FGF2 isoform 24 kDa. Ubiquitous.

It is found in the nucleus. It localises to the cytoplasm. The protein localises to the cytoskeleton. The protein resides in the microtubule organizing center. Its subcellular location is the centrosome. Functionally, centrosomal protein which may be required for microtubule attachment to centrosomes. May act by forming ring-like structures around microtubules. Mediates nuclear translocation and mitogenic activity of the internalized growth factor FGF2, but that of FGF1. This chain is Centrosomal protein of 57 kDa (CEP57), found in Homo sapiens (Human).